A 194-amino-acid polypeptide reads, in one-letter code: Imidazoleglycerol-phosphate dehydratase (194 aa).

It belongs to the imidazoleglycerol-phosphate dehydratase family.

It is found in the cytoplasm. It carries out the reaction D-erythro-1-(imidazol-4-yl)glycerol 3-phosphate = 3-(imidazol-4-yl)-2-oxopropyl phosphate + H2O. The protein operates within amino-acid biosynthesis; L-histidine biosynthesis; L-histidine from 5-phospho-alpha-D-ribose 1-diphosphate: step 6/9. The chain is Imidazoleglycerol-phosphate dehydratase from Listeria monocytogenes serovar 1/2a (strain ATCC BAA-679 / EGD-e).